Consider the following 81-residue polypeptide: Cytotoxin 2 (81 aa).

Residues 1–21 (MKTLLLTLVVVTIVCLDLGYT) form the signal peptide. Disulfide bonds link Cys24–Cys42, Cys35–Cys59, Cys63–Cys74, and Cys75–Cys80.

Belongs to the three-finger toxin family. Short-chain subfamily. Type IA cytotoxin sub-subfamily. In terms of assembly, monomer in solution; Homodimer and oligomer in the presence of negatively charged lipids forming a pore with a size ranging between 20 and 30 Angstroms. In terms of tissue distribution, expressed by the venom gland.

It localises to the secreted. Its subcellular location is the target cell membrane. In terms of biological role, shows cytolytic activity on many different cells by forming pore in lipid membranes. In vivo, increases heart rate or kills the animal by cardiac arrest. In addition, it binds to heparin with high affinity, interacts with Kv channel-interacting protein 1 (KCNIP1) in a calcium-independent manner, and binds to integrin alpha-V/beta-3 (ITGAV/ITGB3) with moderate affinity. The chain is Cytotoxin 2 from Naja kaouthia (Monocled cobra).